A 467-amino-acid chain; its full sequence is Cysteine--tRNA ligase (467 aa).

Cys-29 lines the Zn(2+) pocket. A 'HIGH' region motif is present at residues 31–41 (PTVYDDSHLGH). Residues 155-174 (KLSGRGEDLEQVSRIESSEE) form a disordered region. The span at 158 to 174 (GRGEDLEQVSRIESSEE) shows a compositional bias: basic and acidic residues. Zn(2+) is bound by residues Cys-210, His-239, and Glu-243. The short motif at 271-275 (KMSKS) is the 'KMSKS' region element. Lys-274 lines the ATP pocket.

Belongs to the class-I aminoacyl-tRNA synthetase family. As to quaternary structure, monomer. Zn(2+) serves as cofactor.

It localises to the cytoplasm. The catalysed reaction is tRNA(Cys) + L-cysteine + ATP = L-cysteinyl-tRNA(Cys) + AMP + diphosphate. The polypeptide is Cysteine--tRNA ligase (Wolinella succinogenes (strain ATCC 29543 / DSM 1740 / CCUG 13145 / JCM 31913 / LMG 7466 / NCTC 11488 / FDC 602W) (Vibrio succinogenes)).